Consider the following 327-residue polypeptide: Tryptophan--tRNA ligase (327 aa).

Residues 9-11 (QPS) and 17-18 (GN) each bind ATP. A 'HIGH' region motif is present at residues 10–18 (PSGTLTLGN). Position 132 (Asp132) interacts with L-tryptophan. ATP contacts are provided by residues 144-146 (GDD), Ile183, and 192-196 (KMSKS). The 'KMSKS' region motif lies at 192 to 196 (KMSKS).

It belongs to the class-I aminoacyl-tRNA synthetase family. Homodimer.

Its subcellular location is the cytoplasm. It carries out the reaction tRNA(Trp) + L-tryptophan + ATP = L-tryptophyl-tRNA(Trp) + AMP + diphosphate + H(+). Functionally, catalyzes the attachment of tryptophan to tRNA(Trp). This is Tryptophan--tRNA ligase from Oceanobacillus iheyensis (strain DSM 14371 / CIP 107618 / JCM 11309 / KCTC 3954 / HTE831).